The chain runs to 481 residues: Glutamate--glyoxylate aminotransferase 1 (481 aa).

N6-(pyridoxal phosphate)lysine is present on Lys291. A Peroxisomal targeting signal motif is present at residues 479-481 (SKM).

The protein belongs to the class-I pyridoxal-phosphate-dependent aminotransferase family. Alanine aminotransferase subfamily. In terms of assembly, homodimer. The cofactor is pyridoxal 5'-phosphate. In terms of processing, the N-terminus is blocked. Mostly expressed in leaves, and, to a lower extent, in shoots, stems, flowers, seedlings and green siliques.

Its subcellular location is the peroxisome. The enzyme catalyses L-alanine + 2-oxoglutarate = pyruvate + L-glutamate. It carries out the reaction glyoxylate + L-alanine = glycine + pyruvate. The catalysed reaction is glycine + 2-oxoglutarate = glyoxylate + L-glutamate. The protein operates within amino-acid biosynthesis; glycine biosynthesis; glycine from glyoxylate: step 1/1. It functions in the pathway photosynthesis; C4 acid pathway. It participates in amino-acid degradation; L-alanine degradation via transaminase pathway; pyruvate from L-alanine: step 1/1. Catalyzes the glutamate:glyoxylate (GGT or GGAT), alanine:glyoxylate (AGT), alanine:2-oxoglutarate (AKT) and glutamate:pyruvate (GPT) aminotransferase reactions in peroxisomes. Required for abscisic acid (ABA)- and stress-mediated responses in an H(2)O(2)-dependent manner. Functions as a photorespiratory aminotransferase that modulates amino acid content during photorespiration (GGAT activity); promotes serine, glycine and citrulline metabolism in response to light. This chain is Glutamate--glyoxylate aminotransferase 1 (GGAT1), found in Arabidopsis thaliana (Mouse-ear cress).